The primary structure comprises 152 residues: MALNQLSLSLQFARFPGVEAHRAALPRHAVVRWIRHALSLDAEITVRIVDAEEGQALNREYRHKDYATNVLTFDYAQEPVVMADLVLCAPVVEREAREQNKALHEHYAHLLVHGTLHAQGWDHETSAEDADEMEAYETAIMQELGFADPYAD.

3 residues coordinate Zn(2+): His-113, His-117, and His-123.

This sequence belongs to the endoribonuclease YbeY family. It depends on Zn(2+) as a cofactor.

It is found in the cytoplasm. Functionally, single strand-specific metallo-endoribonuclease involved in late-stage 70S ribosome quality control and in maturation of the 3' terminus of the 16S rRNA. The polypeptide is Endoribonuclease YbeY (Paracidovorax citrulli (strain AAC00-1) (Acidovorax citrulli)).